A 204-amino-acid chain; its full sequence is MGVLGGDAHVPIGSQVSPGSVVVTNNESFGHRKLLKGVDFLVRIKAFAFCLAVIVLLKNNVQTTVIAPGIVLQAKYNNTKAPVSLLVLASICCGYAFLQAVVSLLSFIRDKRVLNNTVLAWLTFLLDQVLTYLLLGSAAATAEAAYIAKRGEDKVQWKAVCGPFKRFCDHFAATVFLSFIAVIAFAVSAAISAYYLFRKSKGFK.

Residues M1–K36 are Cytoplasmic-facing. Residues G37–L57 form a helical membrane-spanning segment. Residues K58 to S84 lie on the Extracellular side of the membrane. An N-linked (GlcNAc...) asparagine glycan is attached at N77. Residues L85–L105 traverse the membrane as a helical segment. At S106–T117 the chain is on the cytoplasmic side. The helical transmembrane segment at V118–A138 threads the bilayer. At A139–H170 the chain is on the extracellular side. A helical transmembrane segment spans residues F171 to I191. Topologically, residues S192–K204 are cytoplasmic.

The protein belongs to the Casparian strip membrane proteins (CASP) family. As to quaternary structure, homodimer and heterodimers.

It is found in the cell membrane. The sequence is that of CASP-like protein 2U2 from Selaginella moellendorffii (Spikemoss).